The chain runs to 313 residues: Serine/threonine-protein kinase SZE1 (313 aa).

A lipid anchor (N-myristoyl glycine) is attached at G2. The region spanning 43-311 (MELGESLGYI…EVLDNLNAIA (269 aa)) is the Protein kinase domain. Residues 49 to 57 (LGYINPKTL) and K71 contribute to the ATP site.

Belongs to the protein kinase superfamily. Ser/Thr protein kinase family. Component of an immune signaling complex made of, at least, SZE1, BKN2/SZE2, ZAR1 and ZED1. Interacts directly with ZED1, ZAR1 and Pseudomonas syringae HOPZ1A at the plasma membrane. In terms of processing, N-terminal myristoylation is critical for plasma membrane localization and implication in defense responses. Autophosphorylated. Expressed in roots, seedlings, rosette leaves, floral organs, siliques and inflorescence stems.

Its subcellular location is the cell membrane. It carries out the reaction L-seryl-[protein] + ATP = O-phospho-L-seryl-[protein] + ADP + H(+). The enzyme catalyses L-threonyl-[protein] + ATP = O-phospho-L-threonyl-[protein] + ADP + H(+). Together with BKN2/SZE2 and ZED1, required for effector-triggered immunity (e.g. Pseudomonas syringae effector type III HopZ1a) via the activation of ZAR1, thus being essential for resistance against P.syringae pv. tomato DC3000 expressing HopZ1a. This is Serine/threonine-protein kinase SZE1 from Arabidopsis thaliana (Mouse-ear cress).